The following is a 199-amino-acid chain: Holliday junction resolvase RecU (199 aa).

Residues Thr-82, Asp-84, Glu-97, and Gln-116 each coordinate Mg(2+).

It belongs to the RecU family. Requires Mg(2+) as cofactor.

The protein resides in the cytoplasm. The catalysed reaction is Endonucleolytic cleavage at a junction such as a reciprocal single-stranded crossover between two homologous DNA duplexes (Holliday junction).. Functionally, endonuclease that resolves Holliday junction intermediates in genetic recombination. Cleaves mobile four-strand junctions by introducing symmetrical nicks in paired strands. Promotes annealing of linear ssDNA with homologous dsDNA. Required for DNA repair, homologous recombination and chromosome segregation. This is Holliday junction resolvase RecU from Streptococcus agalactiae serotype Ia (strain ATCC 27591 / A909 / CDC SS700).